A 164-amino-acid chain; its full sequence is ATP synthase subunit b 1 (164 aa).

The helical transmembrane segment at 8–28 (AETWVAVGFAILMVVFVYFGV) threads the bilayer.

It belongs to the ATPase B chain family. F-type ATPases have 2 components, F(1) - the catalytic core - and F(0) - the membrane proton channel. F(1) has five subunits: alpha(3), beta(3), gamma(1), delta(1), epsilon(1). F(0) has three main subunits: a(1), b(2) and c(10-14). The alpha and beta chains form an alternating ring which encloses part of the gamma chain. F(1) is attached to F(0) by a central stalk formed by the gamma and epsilon chains, while a peripheral stalk is formed by the delta and b chains.

The protein resides in the cell inner membrane. Functionally, f(1)F(0) ATP synthase produces ATP from ADP in the presence of a proton or sodium gradient. F-type ATPases consist of two structural domains, F(1) containing the extramembraneous catalytic core and F(0) containing the membrane proton channel, linked together by a central stalk and a peripheral stalk. During catalysis, ATP synthesis in the catalytic domain of F(1) is coupled via a rotary mechanism of the central stalk subunits to proton translocation. In terms of biological role, component of the F(0) channel, it forms part of the peripheral stalk, linking F(1) to F(0). This Rhodopseudomonas palustris (strain BisA53) protein is ATP synthase subunit b 1.